We begin with the raw amino-acid sequence, 227 residues long: Threonine--tRNA ligase (227 aa).

Residues 1–120 (DIELKLSTRP…LIEHYEGAFP (120 aa)) are catalytic.

This sequence belongs to the class-II aminoacyl-tRNA synthetase family. As to quaternary structure, homodimer.

It is found in the cytoplasm. The catalysed reaction is tRNA(Thr) + L-threonine + ATP = L-threonyl-tRNA(Thr) + AMP + diphosphate + H(+). Functionally, catalyzes the attachment of threonine to tRNA(Thr) in a two-step reaction: L-threonine is first activated by ATP to form Thr-AMP and then transferred to the acceptor end of tRNA(Thr). Also edits incorrectly charged L-seryl-tRNA(Thr). This is Threonine--tRNA ligase from Pseudomonas syringae pv. syringae.